The primary structure comprises 959 residues: DEAD-box ATP-dependent RNA helicase rde-12 (959 aa).

A disordered region spans residues 1–336 (MSSFGNNAGG…EGVNAPVRAP (336 aa)). Residues 71 to 97 (GRREDDRSHSRDNHGGSRYGERDDRGN) are compositionally biased toward basic and acidic residues. Positions 98 to 118 (NGRSADNRYSQSNYNYDSNRG) are enriched in polar residues. Basic and acidic residues predominate over residues 122–134 (YQRDNHGSKDDRG). The segment covering 137-160 (NQYNDHGSNHNSNSRNDQYRQGSY) has biased composition (polar residues). 2 stretches are compositionally biased toward basic and acidic residues: residues 166–181 (SGYR…DNDQ) and 189–201 (RDSD…DHHN). The segment covering 202 to 213 (YNSQSSPRSHQG) has biased composition (polar residues). Composition is skewed to basic and acidic residues over residues 219–239 (SAPK…HDSY) and 255–270 (YRND…DHRS). Positions 271–280 (GGNNSSSGFK) are enriched in low complexity. Residues 281–301 (NDGGFGGNDNRGFGNNGGGSF) are compositionally biased toward gly residues. Low complexity predominate over residues 302 to 317 (GNPNNSYRGNSNNIGG). Positions 380-408 (TSWTNSGLHPTILETLKRIKYNNVRTIQG) match the Q motif motif. In terms of domain architecture, Helicase ATP-binding spans 411–599 (IPQVLDGHDV…NELMKRLPGQ (189 aa)). An ATP-binding site is contributed by 424 to 431 (AETSAGKT). Residues 539–542 (DEAD) carry the DEAD box motif. Residues 632-792 (KLREILKQNV…KVPDFLDAMA (161 aa)) form the Helicase C-terminal domain. Disordered stretches follow at residues 793–834 (KSSR…GGGR) and 858–959 (GGGG…DDEW). 2 stretches are compositionally biased toward gly residues: residues 800 to 834 (GTSG…GGGR) and 858 to 872 (GGGG…GFGG). Residues 930-941 (TLGSSTFGTANN) show a composition bias toward polar residues. Over residues 942-959 (ADEEPTETGADGNDDDEW) the composition is skewed to acidic residues.

This sequence belongs to the DEAD box helicase family. DDX3/DED1 subfamily. Interacts with wago-1, ergo-1 and rde-1. Mg(2+) is required as a cofactor. As to expression, expressed in the soma and germline.

It is found in the cytoplasm. It localises to the perinuclear region. The protein localises to the cytoplasmic granule. Its subcellular location is the P-body. The enzyme catalyses ATP + H2O = ADP + phosphate + H(+). Functionally, probable ATP-dependent RNA helicase involved in RNAi-mediated gene silencing. Specifically required in the endogenous siRNA pathway for biogenesis of secondary endogenous small interfering RNA (siRNA) intermediates called 22G-RNAs. May associate with and recruit rde-10 to primary siRNA-targeted mRNA for secondary siRNA synthesis. May be recruited to target mRNAs by rde-1 and/or ergo-1. The sequence is that of DEAD-box ATP-dependent RNA helicase rde-12 from Caenorhabditis elegans.